Here is a 337-residue protein sequence, read N- to C-terminus: Casein kinase I isoform alpha (337 aa).

The Protein kinase domain occupies 17-285; that stretch reads YKLVRKIGSG…YLRQLFRILF (269 aa). Residues 23 to 31 and Lys46 contribute to the ATP site; that span reads IGSGSFGDI. Asp136 functions as the Proton acceptor in the catalytic mechanism. Residues 309–325 are compositionally biased toward low complexity; the sequence is AASSSGQGQQAQTPTGK. The tract at residues 309-337 is disordered; it reads AASSSGQGQQAQTPTGKQTDKSKSNMKGF.

This sequence belongs to the protein kinase superfamily. CK1 Ser/Thr protein kinase family. Casein kinase I subfamily. Post-translationally, autophosphorylated.

It is found in the cytoplasm. Its subcellular location is the cytoskeleton. It localises to the microtubule organizing center. The protein resides in the centrosome. The protein localises to the chromosome. It is found in the centromere. Its subcellular location is the kinetochore. It localises to the nucleus speckle. The protein resides in the cilium basal body. The protein localises to the spindle. It catalyses the reaction L-seryl-[protein] + ATP = O-phospho-L-seryl-[protein] + ADP + H(+). The catalysed reaction is L-threonyl-[protein] + ATP = O-phospho-L-threonyl-[protein] + ADP + H(+). Functionally, casein kinases are operationally defined by their preferential utilization of acidic proteins such as caseins as substrates. It can phosphorylate a large number of proteins. Participates in Wnt signaling. May play a role in segregating chromosomes during mitosis. May play a role in keratin cytoskeleton disassembly. This Gallus gallus (Chicken) protein is Casein kinase I isoform alpha (CSNK1A1).